The primary structure comprises 247 residues: UPF0280 protein MmarC5_0355 (247 aa).

Belongs to the UPF0280 family.

The sequence is that of UPF0280 protein MmarC5_0355 from Methanococcus maripaludis (strain C5 / ATCC BAA-1333).